A 158-amino-acid polypeptide reads, in one-letter code: Large ribosomal subunit protein uL23 (158 aa).

Positions Met-1 to Arg-43 are disordered. The segment covering Lys-12–Ala-23 has biased composition (low complexity).

Belongs to the universal ribosomal protein uL23 family.

Its function is as follows. This protein binds to a specific region on the 26S rRNA. The sequence is that of Large ribosomal subunit protein uL23 from Puccinia graminis (Black stem rust fungus).